We begin with the raw amino-acid sequence, 72 residues long: Galensin (72 aa).

The signal sequence occupies residues 1 to 22; that stretch reads MLTLKKSMLLLFFLGLVSVSLA. A propeptide spanning residues 23–48 is cleaved from the precursor; the sequence is DDKREDEAEEGEDKRAAEEERNVEKR. Phenylalanine amide is present on Phe71.

The protein belongs to the frog skin active peptide (FSAP) family. Brevinin subfamily. Homodimer; disulfide-linked. As to expression, expressed by the skin glands.

It localises to the secreted. In terms of biological role, antibacterial activity against the Gram-positive bacterium M.luteus and the Gram-negative bacterium E.coli. The chain is Galensin from Kassina senegalensis (Senegal running frog).